Consider the following 25-residue polypeptide: Oxyopinin-3c (25 aa).

As to expression, expressed by the venom gland.

It is found in the secreted. Functionally, may have cytolytic and antimicrobial activity. The protein is Oxyopinin-3c of Oxyopes takobius (Lynx spider).